Reading from the N-terminus, the 34-residue chain is Photosystem II reaction center protein M (34 aa).

The helical transmembrane segment at 5 to 25 (ILGLIATALFIIIPTSFLLIL) threads the bilayer.

Belongs to the PsbM family. As to quaternary structure, PSII is composed of 1 copy each of membrane proteins PsbA, PsbB, PsbC, PsbD, PsbE, PsbF, PsbH, PsbI, PsbJ, PsbK, PsbL, PsbM, PsbT, PsbX, PsbY, PsbZ, Psb30/Ycf12, at least 3 peripheral proteins of the oxygen-evolving complex and a large number of cofactors. It forms dimeric complexes.

It is found in the plastid. The protein resides in the chloroplast thylakoid membrane. In terms of biological role, one of the components of the core complex of photosystem II (PSII). PSII is a light-driven water:plastoquinone oxidoreductase that uses light energy to abstract electrons from H(2)O, generating O(2) and a proton gradient subsequently used for ATP formation. It consists of a core antenna complex that captures photons, and an electron transfer chain that converts photonic excitation into a charge separation. This subunit is found at the monomer-monomer interface. This Nephroselmis olivacea (Green alga) protein is Photosystem II reaction center protein M.